The sequence spans 269 residues: Phosphatidylglycerol--prolipoprotein diacylglyceryl transferase (269 aa).

Helical transmembrane passes span 17-37, 59-79, 95-115, 123-143, 181-201, 206-226, and 242-262; these read IGPI…MLGW, FLVW…VLFY, WQGG…IIAF, LFQV…FGRI, AGLE…LTGI, GALS…SEFF, and MGQL…AWAL. Residue Arg142 coordinates a 1,2-diacyl-sn-glycero-3-phospho-(1'-sn-glycerol).

Belongs to the Lgt family.

The protein localises to the cell inner membrane. It catalyses the reaction L-cysteinyl-[prolipoprotein] + a 1,2-diacyl-sn-glycero-3-phospho-(1'-sn-glycerol) = an S-1,2-diacyl-sn-glyceryl-L-cysteinyl-[prolipoprotein] + sn-glycerol 1-phosphate + H(+). It functions in the pathway protein modification; lipoprotein biosynthesis (diacylglyceryl transfer). Functionally, catalyzes the transfer of the diacylglyceryl group from phosphatidylglycerol to the sulfhydryl group of the N-terminal cysteine of a prolipoprotein, the first step in the formation of mature lipoproteins. The polypeptide is Phosphatidylglycerol--prolipoprotein diacylglyceryl transferase (Paramagnetospirillum magneticum (strain ATCC 700264 / AMB-1) (Magnetospirillum magneticum)).